We begin with the raw amino-acid sequence, 435 residues long: Succinate--CoA ligase [ADP-forming] subunit beta, mitochondrial (435 aa).

The transit peptide at 1–20 (MIGRISQPLLNTSQKFMAPA) directs the protein to the mitochondrion. An ATP-grasp domain is found at 32–259 (MKILQNYEIK…SNAEFRQAKL (228 aa)). Residues lysine 69 and 76–78 (GRG) contribute to the ATP site. Mg(2+) contacts are provided by asparagine 229 and aspartate 243. Substrate-binding positions include asparagine 294 and 352 to 354 (GIM).

Belongs to the succinate/malate CoA ligase beta subunit family. ATP-specific subunit beta subfamily. Heterodimer of an alpha and a beta subunit. The beta subunit determines specificity for ATP. The cofactor is Mg(2+).

It is found in the mitochondrion. It catalyses the reaction succinate + ATP + CoA = succinyl-CoA + ADP + phosphate. The protein operates within carbohydrate metabolism; tricarboxylic acid cycle; succinate from succinyl-CoA (ligase route): step 1/1. Functionally, ATP-specific succinyl-CoA synthetase functions in the citric acid cycle (TCA), coupling the hydrolysis of succinyl-CoA to the synthesis of ATP and thus represents the only step of substrate-level phosphorylation in the TCA. The beta subunit provides nucleotide specificity of the enzyme and binds the substrate succinate, while the binding sites for coenzyme A and phosphate are found in the alpha subunit. The protein is Succinate--CoA ligase [ADP-forming] subunit beta, mitochondrial of Caenorhabditis elegans.